The following is an 834-amino-acid chain: MAP kinase phosphatase with leucine-rich repeats protein 1 (834 aa).

The segment at 1-103 is disordered; sequence MIFKKLFSKG…GSGTTKESKK (103 aa). The span at 36–78 shows a compositional bias: low complexity; it reads GSGTNTNGLSNSTTNPSSIHSTPTTPTTTASTNLTNSNKLSTL. Residues 79 to 98 show a composition bias toward polar residues; sequence APITNGNRSLRGSKDGSGTT. LRR repeat units follow at residues 160-181, 183-204, 206-226, 229-251, 252-273, 274-292, 298-319, 321-342, 345-366, and 368-389; these read ELRSLILDFNKITEIPEQIGLL, NLKHLSLAANQLSQVPEFLSQL, SLESLELGINQFTSFPLNICK, SLTLLRLETNNIKSLPDDFINLE, NLKDLSLLDNQLKEIPDSLPNN, IEKLNLGCNDIINSYSKSL, SLTTLNLSENKIEVLDESLSCL, NVKTLILDCNMIKVIPGSVLGS, SLVTLNLPHNFISDLPAEIVTL, and NLRIIDLRGNNFEFCKNYPSSE. A disordered region spans residues 503-584; it reads YEKQENDENN…ENPLKESQGK (82 aa). A compositionally biased stretch (polar residues) spans 511–536; it reads NNSVTLETTTTISIASDNTDEASIQI. Basic and acidic residues-rich tracts occupy residues 538-554 and 569-582; these read QKEDGDKENLENDDKLL and KQQEQQENPLKESQ. Positions 555 to 615 form a coiled coil; it reads QESFSENNNN…IRLEKIKYQE (61 aa). The 140-residue stretch at 695 to 834 folds into the Tyrosine-protein phosphatase domain; that stretch reads VPDLIIDKLY…LKKFEKDLSK (140 aa). C778 serves as the catalytic Phosphocysteine intermediate.

This sequence belongs to the protein-tyrosine phosphatase family. Non-receptor class dual specificity subfamily.

The catalysed reaction is O-phospho-L-tyrosyl-[protein] + H2O = L-tyrosyl-[protein] + phosphate. It catalyses the reaction O-phospho-L-seryl-[protein] + H2O = L-seryl-[protein] + phosphate. The enzyme catalyses O-phospho-L-threonyl-[protein] + H2O = L-threonyl-[protein] + phosphate. Functionally, probable phosphatase with dual specificity toward Ser/Thr and Tyr-containing proteins. Dephosphorylates pNPP, in vitro. Essential for proper regulation of erkB (erk2) and optimal motility during development. This Dictyostelium discoideum (Social amoeba) protein is MAP kinase phosphatase with leucine-rich repeats protein 1 (mpl1).